Reading from the N-terminus, the 380-residue chain is Probable polyglutamine synthesis accessory protein MT0602 (380 aa).

Belongs to the CapA family.

Functionally, could be involved in the biosynthesis, transport or localization of poly-alpha-L-glutamine (PLG), a cell wall component. Contributes to stress tolerance and virulence. In Mycobacterium tuberculosis (strain CDC 1551 / Oshkosh), this protein is Probable polyglutamine synthesis accessory protein MT0602.